The primary structure comprises 1072 residues: Carbamoyl phosphate synthase large chain (1072 aa).

The tract at residues Met-1–Glu-401 is carboxyphosphate synthetic domain. ATP contacts are provided by Arg-129, Arg-169, Gly-175, Gly-176, Lys-208, Ile-210, Glu-215, Gly-241, Val-242, His-243, Gln-284, and Glu-298. One can recognise an ATP-grasp 1 domain in the interval Arg-133–Val-327. Mg(2+) contacts are provided by Gln-284, Glu-298, and Asn-300. Residues Gln-284, Glu-298, and Asn-300 each contribute to the Mn(2+) site. Residues Leu-402–Ser-546 form an oligomerization domain region. Residues Ile-547 to Gly-929 form a carbamoyl phosphate synthetic domain region. An ATP-grasp 2 domain is found at Glu-671–Leu-861. ATP-binding residues include Arg-707, Arg-746, Glu-752, Gly-777, Val-778, His-779, Ser-780, Gln-820, and Glu-832. The Mg(2+) site is built by Gln-820, Glu-832, and Asn-834. Residues Gln-820, Glu-832, and Asn-834 each contribute to the Mn(2+) site. An MGS-like domain is found at Ile-930–Ala-1072. Positions Ile-930–Ala-1072 are allosteric domain.

This sequence belongs to the CarB family. As to quaternary structure, composed of two chains; the small (or glutamine) chain promotes the hydrolysis of glutamine to ammonia, which is used by the large (or ammonia) chain to synthesize carbamoyl phosphate. Tetramer of heterodimers (alpha,beta)4. The cofactor is Mg(2+). It depends on Mn(2+) as a cofactor.

The catalysed reaction is hydrogencarbonate + L-glutamine + 2 ATP + H2O = carbamoyl phosphate + L-glutamate + 2 ADP + phosphate + 2 H(+). The enzyme catalyses hydrogencarbonate + NH4(+) + 2 ATP = carbamoyl phosphate + 2 ADP + phosphate + 2 H(+). It participates in amino-acid biosynthesis; L-arginine biosynthesis; carbamoyl phosphate from bicarbonate: step 1/1. The protein operates within pyrimidine metabolism; UMP biosynthesis via de novo pathway; (S)-dihydroorotate from bicarbonate: step 1/3. In terms of biological role, large subunit of the glutamine-dependent carbamoyl phosphate synthetase (CPSase). CPSase catalyzes the formation of carbamoyl phosphate from the ammonia moiety of glutamine, carbonate, and phosphate donated by ATP, constituting the first step of 2 biosynthetic pathways, one leading to arginine and/or urea and the other to pyrimidine nucleotides. The large subunit (synthetase) binds the substrates ammonia (free or transferred from glutamine from the small subunit), hydrogencarbonate and ATP and carries out an ATP-coupled ligase reaction, activating hydrogencarbonate by forming carboxy phosphate which reacts with ammonia to form carbamoyl phosphate. In Bacillus cereus (strain ATCC 10987 / NRS 248), this protein is Carbamoyl phosphate synthase large chain.